The following is a 168-amino-acid chain: Cyclic pyranopterin monophosphate synthase (168 aa).

Substrate-binding positions include Leu83–His85 and Met121–Glu122. The active site involves Asp136.

This sequence belongs to the MoaC family. Homohexamer; trimer of dimers.

The catalysed reaction is (8S)-3',8-cyclo-7,8-dihydroguanosine 5'-triphosphate = cyclic pyranopterin phosphate + diphosphate. It participates in cofactor biosynthesis; molybdopterin biosynthesis. Functionally, catalyzes the conversion of (8S)-3',8-cyclo-7,8-dihydroguanosine 5'-triphosphate to cyclic pyranopterin monophosphate (cPMP). This chain is Cyclic pyranopterin monophosphate synthase, found in Nostoc sp. (strain PCC 7120 / SAG 25.82 / UTEX 2576).